Reading from the N-terminus, the 135-residue chain is Cytochrome b5, seed isoform (135 aa).

Residues 5–81 (SKVFTLAEVS…LDEYYVGDID (77 aa)) enclose the Cytochrome b5 heme-binding domain. Heme-binding residues include H40 and H64. The chain crosses the membrane as a helical span at residues 107–127 (FIVKLLQFLVPLIILGVAFGV).

This sequence belongs to the cytochrome b5 family. As to expression, specifically expressed in developing seeds.

Its subcellular location is the endoplasmic reticulum membrane. It localises to the microsome membrane. Cytochrome b5 is a membrane bound hemoprotein which function as an electron carrier for several membrane bound oxygenases. May play a key role in the modification by desaturation of fatty acids in the endoplasmic reticulum, which in the developing seed is utilized for membrane synthesis and in the developmentally regulated production of large amounts of storage lipids. This Nicotiana tabacum (Common tobacco) protein is Cytochrome b5, seed isoform.